The following is a 239-amino-acid chain: tRNA (guanine-N(7)-)-methyltransferase (239 aa).

Positions 69, 94, 121, and 144 each coordinate S-adenosyl-L-methionine. The active site involves aspartate 144. Position 148 (lysine 148) interacts with substrate. The interaction with RNA stretch occupies residues 150 to 155; sequence RHNKRR. Substrate-binding positions include aspartate 180 and 217–220; that span reads TKFE.

Belongs to the class I-like SAM-binding methyltransferase superfamily. TrmB family. Monomer.

It carries out the reaction guanosine(46) in tRNA + S-adenosyl-L-methionine = N(7)-methylguanosine(46) in tRNA + S-adenosyl-L-homocysteine. It functions in the pathway tRNA modification; N(7)-methylguanine-tRNA biosynthesis. Functionally, catalyzes the formation of N(7)-methylguanine at position 46 (m7G46) in tRNA. The polypeptide is tRNA (guanine-N(7)-)-methyltransferase (Pectobacterium atrosepticum (strain SCRI 1043 / ATCC BAA-672) (Erwinia carotovora subsp. atroseptica)).